We begin with the raw amino-acid sequence, 326 residues long: Undecaprenyl-diphosphatase (326 aa).

The next 9 membrane-spanning stretches (helical) occupy residues 11 to 31 (AFSLSVAIAVVYHQAWGIAVA), 42 to 62 (TGVISNGISINLFQAFVLGFI), 90 to 110 (GVAFTAVIQLGSIGAVFWYFW), 138 to 158 (LGIGLGTIPIVFFGLLMKLLV), 165 to 185 (FFRSLSTIAIASIVMALLLAL), 212 to 232 (ALALIPGVSRSGSTLTAGLFI), 242 to 262 (FSFLLGIPAITIAGLVELKGL), 272 to 292 (ILPLIVGTISSAVFSYLAIAW), and 304 to 324 (IFVWYRLIFGVVILTALGMGF).

Belongs to the UppP family.

Its subcellular location is the cell inner membrane. The catalysed reaction is di-trans,octa-cis-undecaprenyl diphosphate + H2O = di-trans,octa-cis-undecaprenyl phosphate + phosphate + H(+). Its function is as follows. Catalyzes the dephosphorylation of undecaprenyl diphosphate (UPP). Confers resistance to bacitracin. This Synechocystis sp. (strain ATCC 27184 / PCC 6803 / Kazusa) protein is Undecaprenyl-diphosphatase.